The primary structure comprises 236 residues: Phosphoribosylaminoimidazole-succinocarboxamide synthase (236 aa).

This sequence belongs to the SAICAR synthetase family.

The enzyme catalyses 5-amino-1-(5-phospho-D-ribosyl)imidazole-4-carboxylate + L-aspartate + ATP = (2S)-2-[5-amino-1-(5-phospho-beta-D-ribosyl)imidazole-4-carboxamido]succinate + ADP + phosphate + 2 H(+). It participates in purine metabolism; IMP biosynthesis via de novo pathway; 5-amino-1-(5-phospho-D-ribosyl)imidazole-4-carboxamide from 5-amino-1-(5-phospho-D-ribosyl)imidazole-4-carboxylate: step 1/2. This is Phosphoribosylaminoimidazole-succinocarboxamide synthase from Pseudomonas putida (strain GB-1).